The primary structure comprises 852 residues: Lon protease homolog 2, peroxisomal (852 aa).

S2 carries the N-acetylserine modification. The region spanning 13–222 (LPLLLTHEGV…MTIPLLVRQI (210 aa)) is the Lon N-terminal domain. 375–382 (GPPGVGKT) lines the ATP pocket. The 187-residue stretch at 651–837 (LSQPGVAIGL…DEVLNAAFDG (187 aa)) folds into the Lon proteolytic domain. Active-site residues include S743 and K786. The Microbody targeting signal motif lies at 850-852 (SKL).

The protein belongs to the peptidase S16 family. Interacts with PEX5. Interacts with TYSND1. May interact with enzymes involved in beta-oxidation of fatty acids, including ACOX1/AOX.

The protein resides in the peroxisome matrix. The enzyme catalyses Hydrolysis of proteins in presence of ATP.. In terms of biological role, ATP-dependent serine protease that mediates the selective degradation of misfolded and unassembled polypeptides in the peroxisomal matrix. Necessary for type 2 peroxisome targeting signal (PTS2)-containing protein processing and facilitates peroxisome matrix protein import. May indirectly regulate peroxisomal fatty acid beta-oxidation through degradation of the self-processed forms of TYSND1. This Pongo abelii (Sumatran orangutan) protein is Lon protease homolog 2, peroxisomal.